Consider the following 268-residue polypeptide: Ubiquinone biosynthesis protein COQ4 homolog, mitochondrial (268 aa).

The transit peptide at 1–25 (MMQRCLRLQKPLALRRGLHLAQVNS) directs the protein to the mitochondrion. The Zn(2+) site is built by His171, Asp172, His175, and Glu187.

Belongs to the COQ4 family. Component of a multi-subunit COQ enzyme complex. Zn(2+) serves as cofactor.

The protein localises to the mitochondrion inner membrane. The catalysed reaction is a 4-hydroxy-3-methoxy-5-(all-trans-polyprenyl)benzoate + H(+) = a 2-methoxy-6-(all-trans-polyprenyl)phenol + CO2. It functions in the pathway cofactor biosynthesis; ubiquinone biosynthesis. Lyase that catalyzes the C1-decarboxylation of 4-hydroxy-3-methoxy-5-(all-trans-polyprenyl)benzoic acid into 2-methoxy-6-(all-trans-polyprenyl)phenol during ubiquinone biosynthesis. This chain is Ubiquinone biosynthesis protein COQ4 homolog, mitochondrial, found in Drosophila simulans (Fruit fly).